Consider the following 131-residue polypeptide: Ribonuclease VapC42 (131 aa).

In terms of domain architecture, PINc spans 1 to 125 (MIVDTSAIVA…FRGDDFTHTD (125 aa)). Residues aspartate 4 and aspartate 100 each contribute to the Mg(2+) site.

Belongs to the PINc/VapC protein family. It depends on Mg(2+) as a cofactor.

Its function is as follows. Toxic component of a type II toxin-antitoxin (TA) system. An RNase. Its cognate antitoxin is VapB42. This is Ribonuclease VapC42 from Mycobacterium tuberculosis (strain CDC 1551 / Oshkosh).